The primary structure comprises 418 residues: UPF0261 protein BRA1168/BS1330_II1159 (418 aa).

Belongs to the UPF0261 family.

The polypeptide is UPF0261 protein BRA1168/BS1330_II1159 (Brucella suis biovar 1 (strain 1330)).